A 402-amino-acid polypeptide reads, in one-letter code: Phosphoglycerate kinase (402 aa).

Substrate contacts are provided by residues 24–26, Arg-40, 63–66, Arg-122, and Arg-155; these read DFN and HFGR. ATP is bound by residues Lys-206, Gly-297, Glu-328, and 357–360; that span reads GGDS.

Belongs to the phosphoglycerate kinase family. In terms of assembly, monomer.

Its subcellular location is the cytoplasm. The enzyme catalyses (2R)-3-phosphoglycerate + ATP = (2R)-3-phospho-glyceroyl phosphate + ADP. The protein operates within carbohydrate degradation; glycolysis; pyruvate from D-glyceraldehyde 3-phosphate: step 2/5. In Synechococcus elongatus (strain ATCC 33912 / PCC 7942 / FACHB-805) (Anacystis nidulans R2), this protein is Phosphoglycerate kinase.